Consider the following 257-residue polypeptide: ATP synthase subunit a (257 aa).

Positions 1–8 are cleaved as a propeptide — removed in mature form; it reads MRHLDFVL. The next 7 membrane-spanning stretches (helical) occupy residues 34-54, 93-113, 122-142, 149-169, 187-207, 210-230, and 231-251; these read LTNI…YSLL, FFPL…IGLV, HFIL…ILGF, FFSL…LVLI, ANIL…YNIM, GIIF…FSGL, and ELAI…SYIK.

The protein belongs to the ATPase A chain family. As to quaternary structure, F-type ATPases have 2 components, CF(1) - the catalytic core - and CF(0) - the membrane proton channel. CF(1) has five subunits: alpha(3), beta(3), gamma(1), delta(1), epsilon(1). CF(0) has three main subunits: a, b and c.

The protein localises to the mitochondrion inner membrane. In terms of biological role, mitochondrial membrane ATP synthase (F(1)F(0) ATP synthase or Complex V) produces ATP from ADP in the presence of a proton gradient across the membrane which is generated by electron transport complexes of the respiratory chain. F-type ATPases consist of two structural domains, F(1) - containing the extramembraneous catalytic core and F(0) - containing the membrane proton channel, linked together by a central stalk and a peripheral stalk. During catalysis, ATP synthesis in the catalytic domain of F(1) is coupled via a rotary mechanism of the central stalk subunits to proton translocation. Key component of the proton channel; it may play a direct role in the translocation of protons across the membrane. This chain is ATP synthase subunit a (atp6), found in Penicillium chrysogenum (Penicillium notatum).